Reading from the N-terminus, the 159-residue chain is Putative RING-H2 finger protein ATL69 (159 aa).

Residues Leu13–Ala33 form a helical membrane-spanning segment. The RING-type; atypical zinc-finger motif lies at Cys94–Arg136.

Belongs to the RING-type zinc finger family. ATL subfamily.

The protein resides in the membrane. It carries out the reaction S-ubiquitinyl-[E2 ubiquitin-conjugating enzyme]-L-cysteine + [acceptor protein]-L-lysine = [E2 ubiquitin-conjugating enzyme]-L-cysteine + N(6)-ubiquitinyl-[acceptor protein]-L-lysine.. It participates in protein modification; protein ubiquitination. The sequence is that of Putative RING-H2 finger protein ATL69 (ATL69) from Arabidopsis thaliana (Mouse-ear cress).